Consider the following 88-residue polypeptide: Acylphosphatase (88 aa).

The Acylphosphatase-like domain maps to 3-88 (RLVALVKGRV…EAGLKGFHVY (86 aa)). Catalysis depends on residues R18 and N36.

This sequence belongs to the acylphosphatase family.

The catalysed reaction is an acyl phosphate + H2O = a carboxylate + phosphate + H(+). This chain is Acylphosphatase (acyP), found in Thermus thermophilus (strain ATCC BAA-163 / DSM 7039 / HB27).